The following is a 513-amino-acid chain: Protein disulfide-isomerase (513 aa).

An N-terminal signal peptide occupies residues 1-25 (MAISKVWISLLLALAVVLSAPAARA). The Thioredoxin 1 domain occupies 26-149 (EEAAAAEEAA…IVEYLKKQVG (124 aa)). Catalysis depends on nucleophile residues cysteine 67 and cysteine 70. An intrachain disulfide couples cysteine 67 to cysteine 70. A glycan (N-linked (GlcNAc...) asparagine) is linked at asparagine 282. Residues 369-488 (FRKSEPIPEA…IVDYIRKNKE (120 aa)) enclose the Thioredoxin 2 domain. Catalysis depends on nucleophile residues cysteine 411 and cysteine 414. Cysteine 411 and cysteine 414 form a disulfide bridge. Positions 491-507 (GQAAAATEKAAEPAATE) are enriched in low complexity. The disordered stretch occupies residues 491 to 513 (GQAAAATEKAAEPAATEPLKDEL). The short motif at 510–513 (KDEL) is the Prevents secretion from ER element.

The protein belongs to the protein disulfide isomerase family.

It localises to the endoplasmic reticulum lumen. The enzyme catalyses Catalyzes the rearrangement of -S-S- bonds in proteins.. In terms of biological role, participates in the folding of proteins containing disulfide bonds, may be involved in glycosylation, prolyl hydroxylation and triglyceride transfer. The sequence is that of Protein disulfide-isomerase (PDI) from Hordeum vulgare (Barley).